Here is a 374-residue protein sequence, read N- to C-terminus: Guanine nucleotide-binding protein subunit alpha-15 (374 aa).

Residues 41 to 374 (GELKLLLLGP…ARYLDEINLL (334 aa)) enclose the G-alpha domain. The segment at 44–57 (KLLLLGPGESGKST) is G1 motif. GTP contacts are provided by residues 49 to 56 (GPGESGKS), 183 to 189 (LRSRMPT), 208 to 212 (DAGGQ), 277 to 280 (NKTD), and alanine 346. Residues serine 56 and threonine 189 each contribute to the Mg(2+) site. The tract at residues 181–189 (DVLRSRMPT) is G2 motif. Positions 204–213 (LRIVDAGGQK) are G3 motif. The interval 273 to 280 (ILFLNKTD) is G4 motif. A G5 motif region spans residues 344–349 (TCATDT).

This sequence belongs to the G-alpha family. G(q) subfamily. G proteins are composed of 3 units; alpha, beta and gamma. The alpha chain contains the guanine nucleotide binding site.

In terms of biological role, guanine nucleotide-binding proteins (G proteins) are involved as modulators or transducers in various transmembrane signaling systems. This chain is Guanine nucleotide-binding protein subunit alpha-15 (Gna15), found in Rattus norvegicus (Rat).